The primary structure comprises 229 residues: Allatostatin-A (229 aa).

A signal peptide spans 1–18; the sequence is MLSTSLPVCFLVIGAALC. A propeptide spanning residues 19-48 is cleaved from the precursor; it reads APERMQNDPDPHDSTAQGSDNHSDHIAPLA. The disordered stretch occupies residues 23–46; sequence MQNDPDPHDSTAQGSDNHSDHIAP. Leu58 carries the post-translational modification Leucine amide. A propeptide spanning residues 62–80 is cleaved from the precursor; that stretch reads AYSYVSEYKRLPVYNFGLG. Leu90 carries the leucine amide modification. A propeptide spanning residues 94–130 is cleaved from the precursor; that stretch reads SVDEDQTNDDQQQIMNNDLDQAALAEFFDQYDDAGYE. At Leu140 the chain carries Leucine amide. Residues 144–152 constitute a propeptide that is removed on maturation; that stretch reads FADDDTSEE. 5 positions are modified to leucine amide: Leu162, Leu173, Leu184, Leu196, and Leu210. Positions 214–229 are excised as a propeptide; it reads SADDASTEDSDNYFDV.

Belongs to the allatostatin family. As to expression, allatostatin-A-1: Expressed in antennal lobe (AL), corpora cardiaca (CC), corpora allata (CA) and gnathal ganglion (GNG) (at protein level). Expression in AL and GNG detected in most animals, in CC and CA in some animals (at protein level). Allatostatin-A-3: Expressed in antennal lobe (AL), corpora cardiaca (CC), corpora allata (CA) and gnathal ganglion (GNG) (at protein level). Expression in AL detected in all animals, in GNG, CC and CA in most animals (at protein level). Allatostatin-A-4: Expressed in antennal lobe (AL), corpora cardiaca (CC), corpora allata (CA) and gnathal ganglion (GNG) in all animals (at protein level). Allatostatin-A-5: Expressed in antennal lobe (AL), corpora cardiaca (CC), corpora allata (CA) and gnathal ganglion (GNG) in all animals (at protein level). Allatostatin-A-6: Expressed in antennal lobe (AL) and gnathal ganglion (GNG) (at protein level). Expression in AL detected in some animals, in GNG in few animals (at protein level). Not expressed in corpora cardiaca (CC) and corpora allata (CA) (at protein level). Allatostatin-A-7: Expressed in antennal lobe (AL), corpora cardiaca (CC), corpora allata (CA) and gnathal ganglion (GNG) (at protein level). Expression in AL detected in all animals, in GNG, CC and CA in most animals (at protein level). Allatostatin-A-8: Expressed in antennal lobe (AL), corpora cardiaca (CC), corpora allata (CA) and gnathal ganglion (GNG) (at protein level). Expression in AL detected in all animals, in GNG, CC and CA in most animals (at protein level). Allatostatin-A-9: Expressed in antennal lobe (AL), corpora cardiaca (CC), corpora allata (CA) and gnathal ganglion (GNG) (at protein level). Expression in AL detected in all animals, in GNG in most animals and in CC and CA in some animals (at protein level).

It is found in the secreted. In terms of biological role, neuropeptide inhibitors of juvenile hormone synthesis and gut muscle contraction. In Agrotis ipsilon (Black cutworm moth), this protein is Allatostatin-A.